A 357-amino-acid polypeptide reads, in one-letter code: MAVKAKGQPPSGYEPKVAEWKRREVKELKELMDEYENVGLVDLEGIPAPQLQEIRAKLRERDTIIRMSRNTLMRIALEEKLDERPELEPLLDYIEGPVAFIFTNLDPFKLYKLLEESKASAPAKPGDIAPEDIVVPEGPTPFEPGPIVSELQQAGLPAQIQDGKVVITKDTVLVKEGEEIDEKTAEILKKLEIEPMEVGVDIVAIVAEGTLFERDDLAIDFDEYEDMAKEAAQHAFNLSINAAIPTAETADVIVAKAHTEALNLAVNAGVPVPDETVMGCILAKAHGEMLALAGAIAEVDEEALDEELLEMVSRSAEAAERKEKEEEEEEEAEEEEAEEEEEEEEEEAAAGLGALFG.

The tract at residues 311-357 is disordered; sequence MVSRSAEAAERKEKEEEEEEEAEEEEAEEEEEEEEEEAAAGLGALFG. Residues 325–348 are compositionally biased toward acidic residues; the sequence is EEEEEEEAEEEEAEEEEEEEEEEA.

The protein belongs to the universal ribosomal protein uL10 family. Part of the 50S ribosomal subunit. Forms part of the ribosomal stalk which helps the ribosome interact with GTP-bound translation factors. Forms a heptameric L10(L12)2(L12)2(L12)2 complex, where L10 forms an elongated spine to which the L12 dimers bind in a sequential fashion.

Forms part of the ribosomal stalk, playing a central role in the interaction of the ribosome with GTP-bound translation factors. This chain is Large ribosomal subunit protein uL10, found in Methanopyrus kandleri (strain AV19 / DSM 6324 / JCM 9639 / NBRC 100938).